The primary structure comprises 287 residues: Bifunctional protein FolD (287 aa).

NADP(+) contacts are provided by residues glycine 160–serine 162, serine 189, and threonine 230.

This sequence belongs to the tetrahydrofolate dehydrogenase/cyclohydrolase family. As to quaternary structure, homodimer.

It carries out the reaction (6R)-5,10-methylene-5,6,7,8-tetrahydrofolate + NADP(+) = (6R)-5,10-methenyltetrahydrofolate + NADPH. The catalysed reaction is (6R)-5,10-methenyltetrahydrofolate + H2O = (6R)-10-formyltetrahydrofolate + H(+). The protein operates within one-carbon metabolism; tetrahydrofolate interconversion. Its function is as follows. Catalyzes the oxidation of 5,10-methylenetetrahydrofolate to 5,10-methenyltetrahydrofolate and then the hydrolysis of 5,10-methenyltetrahydrofolate to 10-formyltetrahydrofolate. The sequence is that of Bifunctional protein FolD from Chlamydia muridarum (strain MoPn / Nigg).